A 156-amino-acid chain; its full sequence is Small ribosomal subunit protein uS7 (156 aa).

Belongs to the universal ribosomal protein uS7 family. As to quaternary structure, part of the 30S ribosomal subunit. Contacts proteins S9 and S11.

One of the primary rRNA binding proteins, it binds directly to 16S rRNA where it nucleates assembly of the head domain of the 30S subunit. Is located at the subunit interface close to the decoding center, probably blocks exit of the E-site tRNA. In Mycolicibacterium smegmatis (strain ATCC 700084 / mc(2)155) (Mycobacterium smegmatis), this protein is Small ribosomal subunit protein uS7.